The primary structure comprises 272 residues: Dioscorin DB3L (272 aa).

The first 25 residues, 1 to 25 (MSSSTLFHLFLLSSLLFSCLSNARP), serve as a signal peptide directing secretion. An Alpha-carbonic anhydrase domain is found at 28 to 263 (DDFSYIEGSP…LKFRTIFFYP (236 aa)). Cysteine 53 and cysteine 213 are joined by a disulfide.

This sequence belongs to the alpha-class carbonic anhydrase family. As to quaternary structure, homodimer; disulfide-linked. Not glycosylated. Expressed in tuber (at protein level).

Loss of hemagglutinating activity by EDTA treatment. The activity is fully recovered by the addition of 5 mM Ca(2+) ions, but not with Mg(2+) and Mn 2(+). Hemagglutination activity is inhibited by maltose and its derivatives, with maltopentaose and maltohexaose being the best inhibitors followed by maltose and iso maltose. Not inhibited by glycoproteins. Functionally, maltose-binding lectin. No affinity is detected toward glucose. Has hemagglutinating activity against rabbit erythrocytes at 3.9 ug/ml. No carbonate dehydratase or trypsin inhibitor activity detected by measuring the hydrolysis of 4-nitrophenyl acetate or the inhibition of bovine trypsin-catalyzed hydrolysis of N-benzoyl-L-arginine ethyl ester, respectively. The polypeptide is Dioscorin DB3L (Dioscorea polystachya (Chinese yam)).